The following is a 619-amino-acid chain: DEAD-box ATP-dependent RNA helicase 35B (619 aa).

2 stretches are compositionally biased toward low complexity: residues 1 to 10 (MAAAAAAAAA) and 49 to 58 (PPTTNAVAVA). Residues 1-72 (MAAAAAAAAA…PPRSTSSPAV (72 aa)) form a disordered region. The Q motif motif lies at 173-201 (RSFGDLRLPEPILRALRGKGIEKPTPIQV). The region spanning 204-388 (LPVALSGRDM…KSALVKPIIV (185 aa)) is the Helicase ATP-binding domain. 217–224 (AFTGSGKT) is a binding site for ATP. The DEAD box signature appears at 336–339 (DEAD). Positions 399–559 (DVIQEVEYVK…RLPPILADLD (161 aa)) constitute a Helicase C-terminal domain. A CCHC-type zinc finger spans residues 576-593 (KGCAFCGGLGHRIEACPK).

This sequence belongs to the DEAD box helicase family. DDX41 subfamily.

It carries out the reaction ATP + H2O = ADP + phosphate + H(+). The chain is DEAD-box ATP-dependent RNA helicase 35B from Oryza sativa subsp. japonica (Rice).